Reading from the N-terminus, the 557-residue chain is Formate--tetrahydrofolate ligase 2 (557 aa).

66-73 (TPAGEGKT) contributes to the ATP binding site.

Belongs to the formate--tetrahydrofolate ligase family.

The enzyme catalyses (6S)-5,6,7,8-tetrahydrofolate + formate + ATP = (6R)-10-formyltetrahydrofolate + ADP + phosphate. Its pathway is one-carbon metabolism; tetrahydrofolate interconversion. The polypeptide is Formate--tetrahydrofolate ligase 2 (Streptococcus pyogenes serotype M28 (strain MGAS6180)).